A 147-amino-acid polypeptide reads, in one-letter code: Plasminogen receptor (KT) (147 aa).

The Extracellular portion of the chain corresponds to 1–52; it reads MGFIFSKSMNENMKNQQEFMVTHARLQLERHLTMQNEMRERQMAMQIAWSRE. The chain crosses the membrane as a helical span at residues 53 to 73; it reads FLKYFGTFFGIATISLATGAL. The Cytoplasmic portion of the chain corresponds to 74 to 78; sequence KRKKP. The chain crosses the membrane as a helical span at residues 79–99; that stretch reads AFLVPIVPLSFIFTYQYDLGY. Residues 100-147 lie on the Extracellular side of the membrane; that stretch reads GTLLQRMKSEAEDILETEKTKLELPKGLITFESLEKARREQSKLFSDK.

In terms of assembly, interacts with PLAT. Interacts with PLAUR. In terms of tissue distribution, expressed in monocytes; detected in differentiated monocytes but not in progenitor cells. Expressed in adrenal medulla and hippocampus.

The protein resides in the cell membrane. Receptor for plasminogen. Regulates urokinase plasminogen activator-dependent and stimulates tissue-type plasminogen activator-dependent cell surface plasminogen activation. Proposed to be part of a local catecholaminergic cell plasminogen activation system that regulates neuroendocrine prohormone processing. Involved in regulation of inflammatory response; regulates monocyte chemotactic migration and matrix metalloproteinase activation, such as of MMP2 and MMP9. This is Plasminogen receptor (KT) (Plgrkt) from Mus musculus (Mouse).